Reading from the N-terminus, the 381-residue chain is Probable serine/threonine-protein kinase PBL25 (381 aa).

Cysteine 3 is lipidated: S-palmitoyl cysteine. The tract at residues 16-41 (GSSMPAPYKQPNSPKRTTGEVVAKNA) is disordered. Phosphothreonine is present on threonine 54. The Protein kinase domain maps to 65–342 (FRQECLIGEG…SDVITALSFL (278 aa)). Residues 71–79 (IGEGGFGRV) and lysine 94 each bind ATP. Tyrosine 139 carries the post-translational modification Phosphotyrosine. Aspartate 192 functions as the Proton acceptor in the catalytic mechanism. Serine 196 and serine 226 each carry phosphoserine. Residue threonine 232 is modified to Phosphothreonine. Tyrosine 240 carries the phosphotyrosine modification. A disordered region spans residues 347–381 (NSSNTGSNHLQQNRSNKYQDAVQWDSSPRYANSQM). The segment covering 355 to 381 (HLQQNRSNKYQDAVQWDSSPRYANSQM) has biased composition (polar residues).

Belongs to the protein kinase superfamily. Ser/Thr protein kinase family.

The protein resides in the cell membrane. It catalyses the reaction L-seryl-[protein] + ATP = O-phospho-L-seryl-[protein] + ADP + H(+). It carries out the reaction L-threonyl-[protein] + ATP = O-phospho-L-threonyl-[protein] + ADP + H(+). In terms of biological role, may be involved in plant defense signaling. This chain is Probable serine/threonine-protein kinase PBL25, found in Arabidopsis thaliana (Mouse-ear cress).